A 378-amino-acid chain; its full sequence is Quinolinate synthase (378 aa).

Residues H59 and S80 each contribute to the iminosuccinate site. C125 lines the [4Fe-4S] cluster pocket. Iminosuccinate contacts are provided by residues 151–153 and S168; that span reads YAN. C212 provides a ligand contact to [4Fe-4S] cluster. Residues 238–240 and T255 each bind iminosuccinate; that span reads HPE. C309 is a [4Fe-4S] cluster binding site.

It belongs to the quinolinate synthase family. Type 1 subfamily. Requires [4Fe-4S] cluster as cofactor.

The protein resides in the cytoplasm. The enzyme catalyses iminosuccinate + dihydroxyacetone phosphate = quinolinate + phosphate + 2 H2O + H(+). The protein operates within cofactor biosynthesis; NAD(+) biosynthesis; quinolinate from iminoaspartate: step 1/1. In terms of biological role, catalyzes the condensation of iminoaspartate with dihydroxyacetone phosphate to form quinolinate. The sequence is that of Quinolinate synthase from Burkholderia pseudomallei (strain 668).